Here is a 1308-residue protein sequence, read N- to C-terminus: Receptor tyrosine-protein kinase erbB-4 (1308 aa).

Residues 1–25 form the signal peptide; it reads MKPATGLWVWVSLLVAAGTVQPSDS. Residues 26 to 651 lie on the Extracellular side of the membrane; the sequence is QSVCAGTENK…STLPQHARTP (626 aa). Cys29 and Cys56 are disulfide-bonded. N-linked (GlcNAc...) asparagine glycosylation is found at Asn138, Asn174, and Asn181. Intrachain disulfides connect Cys156–Cys186, Cys189–Cys197, Cys193–Cys205, Cys213–Cys221, Cys217–Cys229, Cys230–Cys238, Cys234–Cys246, Cys249–Cys258, Cys262–Cys289, Cys293–Cys304, Cys308–Cys323, and Cys326–Cys330. An N-linked (GlcNAc...) asparagine glycan is attached at Asn253. Residues Asn358, Asn410, Asn473, and Asn495 are each glycosylated (N-linked (GlcNAc...) asparagine). Cystine bridges form between Cys503–Cys512, Cys507–Cys520, Cys523–Cys532, Cys536–Cys552, Cys555–Cys569, Cys559–Cys577, Cys580–Cys589, Cys593–Cys614, Cys617–Cys625, and Cys621–Cys633. The N-linked (GlcNAc...) asparagine glycan is linked to Asn548. Asn576 is a glycosylation site (N-linked (GlcNAc...) asparagine). N-linked (GlcNAc...) asparagine glycosylation occurs at Asn620. The helical transmembrane segment at 652 to 675 threads the bilayer; the sequence is LIAAGVIGGLFILVIVGLTFAVYV. The Nuclear localization signal motif lies at 676–684; sequence RRKSIKKKR. Over 676–1308 the chain is Cytoplasmic; the sequence is RRKSIKKKRA…PPYRHRNTVV (633 aa). Residues 718–985 form the Protein kinase domain; sequence LKRVKVLGSG…RMARDPQRYL (268 aa). Residues 724-732, Lys751, 797-799, and 843-848 each bind ATP; these read LGSGAFGTV, QLM, and DLAARN. Residue Asp843 is the Proton acceptor of the active site. 10 positions are modified to phosphotyrosine; by autocatalysis: Tyr875, Tyr1035, Tyr1056, Tyr1150, Tyr1162, Tyr1188, Tyr1202, Tyr1242, Tyr1258, and Tyr1284. 2 short sequence motifs (PPxY motif) span residues 1032-1035 and 1053-1056; these read PPIY and PPAY. The segment at 1117–1150 is disordered; that stretch reads PHVQEDSSTQRYSADPTVFAPERSPRGELDEEGY. The short motif at 1298 to 1301 is the PPxY motif 3 element; sequence PPPY. The short motif at 1306-1308 is the PDZ-binding element; sequence TVV.

It belongs to the protein kinase superfamily. Tyr protein kinase family. EGF receptor subfamily. In terms of assembly, monomer in the absence of bound ligand. Homodimer or heterodimer with another ERBB family member upon ligand binding, thus forming heterotetramers. Interacts with EGFR and ERBB2. Interacts with CBFA2T3. Interacts with DLG2 (via its PDZ domain), DLG3 (via its PDZ domain), DLG4 (via its PDZ domain) and SNTB2 (via its PDZ domain). Interacts with MUC1. Interacts (via its PPxy motifs) with WWOX. Interacts (via the PPxY motif 3 of isoform JM-A CYT-2) with YAP1 (via the WW domain 1 of isoform 1). Interacts (isoform JM-A CYT-1 and isoform JM-B CYT-1) with WWP1. Interacts (via its intracellular domain) with TRIM28. Interacts (via the intracellular domains of both CYT-1 and CYT-2 isoforms) with KAP1; the interaction does not phosphorylate KAP1 but represses ERBB4-mediated transcriptional activity. Interacts with PRPU, DDX23, MATR3, RBM15, ILF3, KAP1, U5S1, U2SURP, ITCH, HNRNPU, AP2A1, NULC, LEO1, WWP2, IGHG1, HXK1, GRB7 and SRRT. Interacts (phosphorylated isoform JM-A CYT-1 and isoform JM-B CYT-1) with PIK3R1. Interacts with SHC1. Interacts with GRB2. Interacts (soluble intracellular domain) with STAT5A. Interacts (soluble intracellular domain) with BCL2. Interacts (phosphorylated) with STAT1. Post-translationally, isoform JM-A CYT-1 and isoform JM-A CYT-2 are processed by ADAM17. Proteolytic processing in response to ligand or 12-O-tetradecanoylphorbol-13-acetate stimulation results in the production of 120 kDa soluble receptor forms and intermediate membrane-anchored 80 kDa fragments (m80HER4), which are further processed by a presenilin-dependent gamma-secretase to release a cytoplasmic intracellular domain (E4ICD; E4ICD1/s80Cyt1 or E4ICD2/s80Cyt2, depending on the isoform). Membrane-anchored 80 kDa fragments of the processed isoform JM-A CYT-1 are more readily degraded by the proteasome than fragments of isoform JM-A CYT-2, suggesting a prevalence of E4ICD2 over E4ICD1. Isoform JM-B CYT-1 and isoform JM-B CYT-2 lack the ADAM17 cleavage site and are not processed by ADAM17, precluding further processing by gamma-secretase. Autophosphorylated on tyrosine residues in response to ligand binding. Autophosphorylation occurs in trans, i.e. one subunit of the dimeric receptor phosphorylates tyrosine residues on the other subunit. Ligands trigger phosphorylation at specific tyrosine residues, thereby creating binding sites for scaffold proteins and effectors. Constitutively phosphorylated at a basal level when overexpressed in heterologous systems; ligand binding leads to increased phosphorylation. Phosphorylation at Tyr-1035 is important for interaction with STAT1. Phosphorylation at Tyr-1056 is important for interaction with PIK3R1. Phosphorylation at Tyr-1242 is important for interaction with SHC1. Phosphorylation at Tyr-1188 may also contribute to the interaction with SHC1. Isoform JM-A CYT-2 is constitutively phosphorylated on tyrosine residues in a ligand-independent manner. E4ICD2 but not E4ICD1 is phosphorylated on tyrosine residues. In terms of processing, ubiquitinated. During mitosis, the ERBB4 intracellular domain is ubiquitinated by the APC/C complex and targeted to proteasomal degradation. Isoform JM-A CYT-1 and isoform JM-B CYT-1 are ubiquitinated by WWP1. The ERBB4 intracellular domain (E4ICD1) is ubiquitinated, and this involves NEDD4. In terms of tissue distribution, expressed at highest levels in brain, heart, kidney, in addition to skeletal muscle, parathyroid, cerebellum, pituitary, spleen, testis and breast. Lower levels in thymus, lung, salivary gland, and pancreas. Isoform JM-A CYT-1 and isoform JM-B CYT-1 are expressed in cerebellum, but only the isoform JM-B is expressed in the heart.

The protein resides in the cell membrane. Its subcellular location is the nucleus. It localises to the mitochondrion. The catalysed reaction is L-tyrosyl-[protein] + ATP = O-phospho-L-tyrosyl-[protein] + ADP + H(+). With respect to regulation, binding of a cognate ligand leads to dimerization and activation by autophosphorylation on tyrosine residues. In vitro kinase activity is increased by Mg(2+). Inhibited by PD153035, lapatinib, gefitinib (iressa, ZD1839), AG1478 and BIBX1382BS. Its function is as follows. Tyrosine-protein kinase that plays an essential role as cell surface receptor for neuregulins and EGF family members and regulates development of the heart, the central nervous system and the mammary gland, gene transcription, cell proliferation, differentiation, migration and apoptosis. Required for normal cardiac muscle differentiation during embryonic development, and for postnatal cardiomyocyte proliferation. Required for normal development of the embryonic central nervous system, especially for normal neural crest cell migration and normal axon guidance. Required for mammary gland differentiation, induction of milk proteins and lactation. Acts as cell-surface receptor for the neuregulins NRG1, NRG2, NRG3 and NRG4 and the EGF family members BTC, EREG and HBEGF. Ligand binding triggers receptor dimerization and autophosphorylation at specific tyrosine residues that then serve as binding sites for scaffold proteins and effectors. Ligand specificity and signaling is modulated by alternative splicing, proteolytic processing, and by the formation of heterodimers with other ERBB family members, thereby creating multiple combinations of intracellular phosphotyrosines that trigger ligand- and context-specific cellular responses. Mediates phosphorylation of SHC1 and activation of the MAP kinases MAPK1/ERK2 and MAPK3/ERK1. Isoform JM-A CYT-1 and isoform JM-B CYT-1 phosphorylate PIK3R1, leading to the activation of phosphatidylinositol 3-kinase and AKT1 and protect cells against apoptosis. Isoform JM-A CYT-1 and isoform JM-B CYT-1 mediate reorganization of the actin cytoskeleton and promote cell migration in response to NRG1. Isoform JM-A CYT-2 and isoform JM-B CYT-2 lack the phosphotyrosine that mediates interaction with PIK3R1, and hence do not phosphorylate PIK3R1, do not protect cells against apoptosis, and do not promote reorganization of the actin cytoskeleton and cell migration. Proteolytic processing of isoform JM-A CYT-1 and isoform JM-A CYT-2 gives rise to the corresponding soluble intracellular domains (4ICD) that translocate to the nucleus, promote nuclear import of STAT5A, activation of STAT5A, mammary epithelium differentiation, cell proliferation and activation of gene expression. The ERBB4 soluble intracellular domains (4ICD) colocalize with STAT5A at the CSN2 promoter to regulate transcription of milk proteins during lactation. The ERBB4 soluble intracellular domains can also translocate to mitochondria and promote apoptosis. The sequence is that of Receptor tyrosine-protein kinase erbB-4 (ERBB4) from Homo sapiens (Human).